The primary structure comprises 214 residues: uncharacterized protein (214 aa).

An N-terminal signal peptide occupies residues 1-24; the sequence is MKIWIKAICITSFVIQMSACSSSA. Residues 64–197 form the TNase-like domain; sequence ETVKGKVLHI…KEAKAGVWSI (134 aa). Catalysis depends on residues R91, E99, and R142.

This is an uncharacterized protein from Bacillus anthracis.